The primary structure comprises 645 residues: Serine/threonine-protein kinase BUR1 (645 aa).

In terms of domain architecture, Protein kinase spans 55-379; it reads YREEEKLGQG…AMKAKKHPFF (325 aa). ATP contacts are provided by residues 61–69 and K84; that span reads LGQGTFGEV. The active-site Proton acceptor is the D208. Disordered regions lie at residues 407–428, 442–513, and 533–645; these read EMNE…STDN, ASIP…KYPA, and RYRN…ADYY. 2 stretches are compositionally biased toward polar residues: residues 409 to 428 and 457 to 474; these read NESM…STDN and IPAQ…TQNI. Positions 477–486 are enriched in pro residues; the sequence is EPIPTAPLPK. Residues 578–598 are compositionally biased toward polar residues; it reads NRYQNQDYNTSRNTGYNQYSQ.

The protein belongs to the protein kinase superfamily. CMGC Ser/Thr protein kinase family. CDC2/CDKX subfamily.

It is found in the nucleus. The catalysed reaction is L-seryl-[protein] + ATP = O-phospho-L-seryl-[protein] + ADP + H(+). It carries out the reaction L-threonyl-[protein] + ATP = O-phospho-L-threonyl-[protein] + ADP + H(+). The enzyme catalyses [DNA-directed RNA polymerase] + ATP = phospho-[DNA-directed RNA polymerase] + ADP + H(+). Serine/threonine-protein kinase involved in transcription regulation. Phosphorylates the UBC2/RAD6 ubiquitin-conjugating enzyme (E2), leading to monoubiquitination of histone H2B and the silencing of telomeric-associated genes. Also required for histone H3 methylation. Necessary for the recovery from pheromone-induced growth arrest in the cell cycle G1 phase. In Kluyveromyces lactis (strain ATCC 8585 / CBS 2359 / DSM 70799 / NBRC 1267 / NRRL Y-1140 / WM37) (Yeast), this protein is Serine/threonine-protein kinase BUR1 (BUR1).